A 454-amino-acid chain; its full sequence is Protein disulfide-isomerase TMX3 (454 aa).

A signal peptide spans 1 to 24 (MAAWKSWTALRLCATVVVLDMVVC). One can recognise a Thioredoxin domain in the interval 25–128 (KGFVEDLDES…KDDIIEFAHR (104 aa)). Residues 25–375 (KGFVEDLDES…TIVSIFKSSP (351 aa)) are Lumenal-facing. Active-site nucleophile residues include cysteine 53 and cysteine 56. Cysteine 53 and cysteine 56 form a disulfide bridge. N-linked (GlcNAc...) asparagine glycans are attached at residues asparagine 258 and asparagine 313. The helical transmembrane segment at 376–396 (LMGCFLFGLPLGVISIMCYGI) threads the bilayer. Over 397-454 (YTADTDGGYIEERYEVSKSENENQEQIEESKEQQEPSSGGSVVPTVQEPKDVLEKKKD) the chain is Cytoplasmic. A disordered region spans residues 412 to 454 (VSKSENENQEQIEESKEQQEPSSGGSVVPTVQEPKDVLEKKKD). A compositionally biased stretch (basic and acidic residues) spans 444 to 454 (EPKDVLEKKKD). Residues 451-454 (KKKD) carry the Di-lysine motif motif.

The protein belongs to the protein disulfide isomerase family. In terms of processing, N-glycosylated. In terms of tissue distribution, widely expressed. Expressed in brain, testis, lung, skin, kidney, uterus, bone, stomach, liver, prostate, placenta, eye and muscle.

It is found in the endoplasmic reticulum membrane. It catalyses the reaction Catalyzes the rearrangement of -S-S- bonds in proteins.. Functionally, probable disulfide isomerase, which participates in the folding of proteins containing disulfide bonds. May act as a dithiol oxidase. Acts as a regulator of endoplasmic reticulum-mitochondria contact sites via its ability to regulate redox signals. This chain is Protein disulfide-isomerase TMX3 (TMX3), found in Homo sapiens (Human).